Consider the following 224-residue polypeptide: MTVAIIRFGGSNCDRDAERALAHLDIDAEIVWHEDGLPEETTGVMIPGGFSYGDYLRAGAMAARAPIMDDVREQAEAGVPVLGVCNGAQIGSEGDLTPGAFTTNRSARFQCEPVYLRVENAETPWTEAYEDGEVIEVPIAHGEGRFEIADDELETLVDEDRVIFRYCDADGNVTDAANPNGSKDNVAGVLGEHESVAVLMPHPERASLPDIGPTDGQGVLEGFR.

The 223-residue stretch at 2-224 (TVAIIRFGGS…DGQGVLEGFR (223 aa)) folds into the Glutamine amidotransferase type-1 domain. The Nucleophile role is filled by Cys-85. Catalysis depends on residues His-202 and Glu-204. Positions 204–224 (ERASLPDIGPTDGQGVLEGFR) are disordered.

As to quaternary structure, part of the FGAM synthase complex composed of 1 PurL, 1 PurQ and 2 PurS subunits.

The protein localises to the cytoplasm. The enzyme catalyses N(2)-formyl-N(1)-(5-phospho-beta-D-ribosyl)glycinamide + L-glutamine + ATP + H2O = 2-formamido-N(1)-(5-O-phospho-beta-D-ribosyl)acetamidine + L-glutamate + ADP + phosphate + H(+). It carries out the reaction L-glutamine + H2O = L-glutamate + NH4(+). It participates in purine metabolism; IMP biosynthesis via de novo pathway; 5-amino-1-(5-phospho-D-ribosyl)imidazole from N(2)-formyl-N(1)-(5-phospho-D-ribosyl)glycinamide: step 1/2. Its function is as follows. Part of the phosphoribosylformylglycinamidine synthase complex involved in the purines biosynthetic pathway. Catalyzes the ATP-dependent conversion of formylglycinamide ribonucleotide (FGAR) and glutamine to yield formylglycinamidine ribonucleotide (FGAM) and glutamate. The FGAM synthase complex is composed of three subunits. PurQ produces an ammonia molecule by converting glutamine to glutamate. PurL transfers the ammonia molecule to FGAR to form FGAM in an ATP-dependent manner. PurS interacts with PurQ and PurL and is thought to assist in the transfer of the ammonia molecule from PurQ to PurL. This Natronomonas pharaonis (strain ATCC 35678 / DSM 2160 / CIP 103997 / JCM 8858 / NBRC 14720 / NCIMB 2260 / Gabara) (Halobacterium pharaonis) protein is Phosphoribosylformylglycinamidine synthase subunit PurQ.